Reading from the N-terminus, the 268-residue chain is Ubiquinone biosynthesis protein COQ4 homolog, mitochondrial (268 aa).

Positions 171, 172, 175, and 187 each coordinate Zn(2+).

The protein belongs to the COQ4 family. In terms of assembly, component of a multi-subunit COQ enzyme complex. Requires Zn(2+) as cofactor.

Its subcellular location is the mitochondrion inner membrane. It carries out the reaction a 4-hydroxy-3-methoxy-5-(all-trans-polyprenyl)benzoate + H(+) = a 2-methoxy-6-(all-trans-polyprenyl)phenol + CO2. It participates in cofactor biosynthesis; ubiquinone biosynthesis. Functionally, lyase that catalyzes the C1-decarboxylation of 4-hydroxy-3-methoxy-5-(all-trans-polyprenyl)benzoic acid into 2-methoxy-6-(all-trans-polyprenyl)phenol during ubiquinone biosynthesis. The sequence is that of Ubiquinone biosynthesis protein COQ4 homolog, mitochondrial from Drosophila erecta (Fruit fly).